Reading from the N-terminus, the 490-residue chain is Coagulation factor X (490 aa).

Residues methionine 1–serine 20 form the signal peptide. Residues glycine 21–arginine 40 constitute a propeptide that is removed on maturation. Residues alanine 41–valine 85 enclose the Gla domain. 4-carboxyglutamate occurs at positions 46, 47, 54, 56, 59, and 60. Cysteine 57 and cysteine 62 form a disulfide bridge. A glycan (N-linked (GlcNAc...) asparagine) is linked at asparagine 61. 6 positions are modified to 4-carboxyglutamate: glutamate 65, glutamate 66, glutamate 69, glutamate 72, glutamate 75, and glutamate 79. The region spanning aspartate 86 to glutamate 122 is the EGF-like 1; calcium-binding domain. 11 disulfide bridges follow: cysteine 90–cysteine 101, cysteine 95–cysteine 110, cysteine 112–cysteine 121, cysteine 129–cysteine 140, cysteine 136–cysteine 149, cysteine 151–cysteine 164, cysteine 172–cysteine 340, cysteine 239–cysteine 244, cysteine 259–cysteine 275, cysteine 388–cysteine 402, and cysteine 413–cysteine 441. Position 103 is a (3R)-3-hydroxyaspartate (aspartate 103). An EGF-like 2 domain is found at threonine 125 to isoleucine 165. A disordered region spans residues serine 183 to leucine 230. A propeptide spans proline 184–arginine 232 (activation peptide). N-linked (GlcNAc...) asparagine glycosylation is found at asparagine 187 and asparagine 205. Positions aspartate 203 to proline 212 are enriched in polar residues. Residues isoleucine 233–arginine 465 enclose the Peptidase S1 domain. Active-site charge relay system residues include histidine 274 and aspartate 320. Serine 417 (charge relay system) is an active-site residue.

The protein belongs to the peptidase S1 family. The two chains are formed from a single-chain precursor by the excision of two Arg residues and are held together by 1 or more disulfide bonds. Forms a heterodimer with SERPINA5. Post-translationally, the vitamin K-dependent, enzymatic carboxylation of some glutamate residues allows the modified protein to bind calcium. In terms of processing, N- and O-glycosylated. Proteolytically cleaved and activated by cathepsin CTSG. The activation peptide is cleaved by factor IXa (in the intrinsic pathway), or by factor VIIa (in the extrinsic pathway). Post-translationally, the iron and 2-oxoglutarate dependent 3-hydroxylation of aspartate and asparagine is (R) stereospecific within EGF domains.

It is found in the secreted. The catalysed reaction is Selective cleavage of Arg-|-Thr and then Arg-|-Ile bonds in prothrombin to form thrombin.. Its activity is regulated as follows. Inhibited by SERPINA5. Functionally, factor Xa is a vitamin K-dependent glycoprotein that converts prothrombin to thrombin in the presence of factor Va, calcium and phospholipid during blood clotting. Factor Xa activates pro-inflammatory signaling pathways in a protease-activated receptor (PAR)-dependent manner. The sequence is that of Coagulation factor X (F10) from Oryctolagus cuniculus (Rabbit).